The following is a 208-amino-acid chain: MITLWGRNNSTNVKKVLLTLEELELPYEQILAGREFGINHDADFLAMNPNGLVPLLRDDESDLILWESNAIVRYLAAQYGQKRLWIDSPARRAEAEKWMDWANQTLSNAHRGILMGLVRTPPEERDQAAIDASCKECDALFALLDAELAKVKWFSGDEFGVGDIAIAPFIYNLFNVGLTWTPRPNLQRWYQQLTERPAVRKVVMIPVS.

The GST N-terminal domain occupies 1–83 (MITLWGRNNS…YLAAQYGQKR (83 aa)). Glutathione is bound by residues Asn12, Asn39, Val53, and 67–68 (ES). The GST C-terminal domain maps to 88–208 (SPARRAEAEK…VRKVVMIPVS (121 aa)).

This sequence belongs to the GST superfamily.

The catalysed reaction is RX + glutathione = an S-substituted glutathione + a halide anion + H(+). Its function is as follows. Conjugation of reduced glutathione to a wide number of exogenous and endogenous hydrophobic electrophiles. This chain is Glutathione S-transferase GstB (gstB), found in Escherichia coli O6:H1 (strain CFT073 / ATCC 700928 / UPEC).